The chain runs to 216 residues: Protein-L-isoaspartate O-methyltransferase (216 aa).

Residue serine 66 is part of the active site.

It belongs to the methyltransferase superfamily. L-isoaspartyl/D-aspartyl protein methyltransferase family.

It is found in the cytoplasm. The enzyme catalyses [protein]-L-isoaspartate + S-adenosyl-L-methionine = [protein]-L-isoaspartate alpha-methyl ester + S-adenosyl-L-homocysteine. Catalyzes the methyl esterification of L-isoaspartyl residues in peptides and proteins that result from spontaneous decomposition of normal L-aspartyl and L-asparaginyl residues. It plays a role in the repair and/or degradation of damaged proteins. In Colwellia psychrerythraea (strain 34H / ATCC BAA-681) (Vibrio psychroerythus), this protein is Protein-L-isoaspartate O-methyltransferase.